Consider the following 198-residue polypeptide: Putative Do-like 15 protein (198 aa).

The interval 48–198 is serine protease; sequence KIFSFSREPN…VFENDSPSDK (151 aa). Residues His-86 and Ser-175 each act as charge relay system in the active site.

Belongs to the peptidase S1B family.

The sequence is that of Putative Do-like 15 protein (DEGP15) from Arabidopsis thaliana (Mouse-ear cress).